The chain runs to 196 residues: Holliday junction branch migration complex subunit RuvA (196 aa).

The segment at 1-63 (MYDYIKGKLS…DDAHLLFGFH (63 aa)) is domain I. Residues 64-142 (TENEKEIFLN…EASGESATSR (79 aa)) form a domain II region. The segment at 143-148 (KVSSEQ) is flexible linker. The tract at residues 148–196 (QNSNLEEAMEALLALGYKATELKKVKAFFEGTNETVEQYIKSSLKMLMK) is domain III.

This sequence belongs to the RuvA family. Homotetramer. Forms an RuvA(8)-RuvB(12)-Holliday junction (HJ) complex. HJ DNA is sandwiched between 2 RuvA tetramers; dsDNA enters through RuvA and exits via RuvB. An RuvB hexamer assembles on each DNA strand where it exits the tetramer. Each RuvB hexamer is contacted by two RuvA subunits (via domain III) on 2 adjacent RuvB subunits; this complex drives branch migration. In the full resolvosome a probable DNA-RuvA(4)-RuvB(12)-RuvC(2) complex forms which resolves the HJ.

It localises to the cytoplasm. In terms of biological role, the RuvA-RuvB-RuvC complex processes Holliday junction (HJ) DNA during genetic recombination and DNA repair, while the RuvA-RuvB complex plays an important role in the rescue of blocked DNA replication forks via replication fork reversal (RFR). RuvA specifically binds to HJ cruciform DNA, conferring on it an open structure. The RuvB hexamer acts as an ATP-dependent pump, pulling dsDNA into and through the RuvAB complex. HJ branch migration allows RuvC to scan DNA until it finds its consensus sequence, where it cleaves and resolves the cruciform DNA. In Streptococcus agalactiae serotype III (strain NEM316), this protein is Holliday junction branch migration complex subunit RuvA.